A 491-amino-acid polypeptide reads, in one-letter code: Acetyl-coenzyme A carboxylase carboxyl transferase subunit beta, chloroplastic (491 aa).

One can recognise a CoA carboxyltransferase N-terminal domain in the interval 229 to 491 (LWVQCENCYG…FQLHGFFPLT (263 aa)). Residues Cys233, Cys236, Cys252, and Cys255 each contribute to the Zn(2+) site. The C4-type zinc-finger motif lies at 233–255 (CENCYGLNYKQFFRSRLNICEHC).

This sequence belongs to the AccD/PCCB family. Acetyl-CoA carboxylase is a heterohexamer composed of biotin carboxyl carrier protein, biotin carboxylase and 2 subunits each of ACCase subunit alpha and ACCase plastid-coded subunit beta (accD). The cofactor is Zn(2+).

It localises to the plastid. The protein localises to the chloroplast stroma. The enzyme catalyses N(6)-carboxybiotinyl-L-lysyl-[protein] + acetyl-CoA = N(6)-biotinyl-L-lysyl-[protein] + malonyl-CoA. It functions in the pathway lipid metabolism; malonyl-CoA biosynthesis; malonyl-CoA from acetyl-CoA: step 1/1. Component of the acetyl coenzyme A carboxylase (ACC) complex. Biotin carboxylase (BC) catalyzes the carboxylation of biotin on its carrier protein (BCCP) and then the CO(2) group is transferred by the transcarboxylase to acetyl-CoA to form malonyl-CoA. This is Acetyl-coenzyme A carboxylase carboxyl transferase subunit beta, chloroplastic from Lemna minor (Common duckweed).